Here is a 692-residue protein sequence, read N- to C-terminus: Elongation factor G (692 aa).

Residues 8 to 282 (ERTRNIGIMA…AIVYYLPSPV (275 aa)) enclose the tr-type G domain. GTP contacts are provided by residues 17 to 24 (AHIDAGKT), 81 to 85 (DTPGH), and 135 to 138 (NKMD).

The protein belongs to the TRAFAC class translation factor GTPase superfamily. Classic translation factor GTPase family. EF-G/EF-2 subfamily.

The protein localises to the cytoplasm. In terms of biological role, catalyzes the GTP-dependent ribosomal translocation step during translation elongation. During this step, the ribosome changes from the pre-translocational (PRE) to the post-translocational (POST) state as the newly formed A-site-bound peptidyl-tRNA and P-site-bound deacylated tRNA move to the P and E sites, respectively. Catalyzes the coordinated movement of the two tRNA molecules, the mRNA and conformational changes in the ribosome. The chain is Elongation factor G from Carboxydothermus hydrogenoformans (strain ATCC BAA-161 / DSM 6008 / Z-2901).